The sequence spans 541 residues: Tyrosine-protein kinase Yes (541 aa).

Residues 1 to 20 (MGCIKSKEDKGPAMKYRTDN) are compositionally biased toward basic and acidic residues. Positions 1 to 43 (MGCIKSKEDKGPAMKYRTDNTPEPISSHVSHYGSDSSQATQSP) are disordered. Gly-2 carries N-myristoyl glycine lipidation. A lipid anchor (S-palmitoyl cysteine; in membrane form) is attached at Cys-3. Over residues 26 to 37 (SSHVSHYGSDSS) the composition is skewed to low complexity. The SH3 domain maps to 89 to 150 (GGVTVFVALY…PSNYVAPADS (62 aa)). An SH2 domain is found at 156–253 (WYFGKMGRKD…GLCHKLTTVC (98 aa)). A Protein kinase domain is found at 275–528 (LRLEVKLGQG…YIQSFLEDYF (254 aa)). ATP contacts are provided by residues 281 to 289 (LGQGCFGEV) and Lys-303. The active-site Proton acceptor is Asp-394. Tyr-424 bears the Phosphotyrosine; by autocatalysis mark. Phosphotyrosine; by CSK is present on Tyr-535.

It belongs to the protein kinase superfamily. Tyr protein kinase family. SRC subfamily. In terms of processing, autophosphorylation at Tyr-424 maintains enzyme activity. Post-translationally, palmitoylation at Cys-3 promotes membrane localization.

It is found in the cell membrane. It localises to the cytoplasm. The protein resides in the cytoskeleton. The protein localises to the microtubule organizing center. Its subcellular location is the centrosome. It is found in the cytosol. It localises to the cell junction. The catalysed reaction is L-tyrosyl-[protein] + ATP = O-phospho-L-tyrosyl-[protein] + ADP + H(+). Its function is as follows. Non-receptor protein tyrosine kinase that is involved in the regulation of cell growth and survival, apoptosis, cell-cell adhesion, cytoskeleton remodeling, differentiation, G2/M progression and cytokinesis. In Gallus gallus (Chicken), this protein is Tyrosine-protein kinase Yes (YES1).